The following is a 319-amino-acid chain: Beta-ketoacyl-[acyl-carrier-protein] synthase III (319 aa).

Active-site residues include Cys115 and His246. The interval Gln247–Arg251 is ACP-binding. Asn276 is a catalytic residue.

Belongs to the thiolase-like superfamily. FabH family. Homodimer.

The protein localises to the cytoplasm. The enzyme catalyses malonyl-[ACP] + acetyl-CoA + H(+) = 3-oxobutanoyl-[ACP] + CO2 + CoA. Its pathway is lipid metabolism; fatty acid biosynthesis. Its function is as follows. Catalyzes the condensation reaction of fatty acid synthesis by the addition to an acyl acceptor of two carbons from malonyl-ACP. Catalyzes the first condensation reaction which initiates fatty acid synthesis and may therefore play a role in governing the total rate of fatty acid production. Possesses both acetoacetyl-ACP synthase and acetyl transacylase activities. Its substrate specificity determines the biosynthesis of branched-chain and/or straight-chain of fatty acids. This is Beta-ketoacyl-[acyl-carrier-protein] synthase III from Coxiella burnetii (strain RSA 331 / Henzerling II).